Here is a 578-residue protein sequence, read N- to C-terminus: Putative transporter B0361.11 (578 aa).

The interval 1–30 is disordered; it reads MSISRRSYEQFDEMKSENQENNSKKKSSER. A run of 11 helical transmembrane segments spans residues 51–71, 148–168, 182–202, 232–252, 263–283, 339–359, 373–393, 399–419, 426–446, 457–477, and 486–506; these read IFTYVLVQTLNFFYSSSMYIM, FGLTIFTIGAVIAVPFMSMLA, ILAFLANMAASFSPNFAIFLI, AWITVVYNVAWSLGMVWTLLV, YFIVSLPGVYGFALWYFLPES, IWLLFANGFIEMVISLVYFAI, AFLYSSLIEIPAGLAVIPLMM, MIVIWCLVFQTLALIGVTVFL, LVIMLVAKVMATIIYSVHPIW, SLCFSLMNIPQSMGIIMSPYV, and WIPFVVIALFSFISATLAFML. Residues 532 to 550 show a composition bias toward low complexity; sequence AYRRSKSSSSSVSALSKTS. Residues 532–561 are disordered; that stretch reads AYRRSKSSSSSVSALSKTSVRSKKTLSSES.

The protein belongs to the major facilitator superfamily. Sugar transporter (TC 2.A.1.1) family.

It localises to the membrane. The polypeptide is Putative transporter B0361.11 (Caenorhabditis elegans).